The sequence spans 883 residues: Glutamate receptor 2 (883 aa).

Positions methionine 1–serine 24 are cleaved as a signal peptide. At asparagine 25–alanine 543 the chain is on the extracellular side. Cysteine 78 and cysteine 330 are disulfide-bonded. N-linked (GlcNAc...) asparagine glycosylation is found at asparagine 256, asparagine 370, asparagine 406, and asparagine 413. Residues proline 499, threonine 501, and arginine 506 each coordinate L-glutamate. The chain crosses the membrane as a helical span at residues tyrosine 544–valine 564. The Cytoplasmic segment spans residues serine 565 to glutamate 591. The helical; Pore-forming intramembrane region spans phenylalanine 592–glutamine 607. An intramembrane segment occupies glutamine 608–cysteine 610. Cysteine 610 is lipidated: S-palmitoyl cysteine. The Cytoplasmic segment spans residues aspartate 611 to serine 616. The helical transmembrane segment at leucine 617 to tyrosine 637 threads the bilayer. Residues threonine 638–asparagine 812 lie on the Extracellular side of the membrane. The L-glutamate site is built by serine 675 and threonine 676. Residue serine 683 is modified to Phosphoserine; by PKC. Serine 717 is subject to Phosphoserine; by PKG. Glutamate 726 provides a ligand contact to L-glutamate. An intrachain disulfide couples cysteine 739 to cysteine 794. Residues valine 813–isoleucine 833 form a helical membrane-spanning segment. The Cytoplasmic segment spans residues glutamate 834 to isoleucine 883. Cysteine 836 carries S-palmitoyl cysteine lipidation. 2 positions are modified to phosphoserine: serine 860 and serine 863. A required for interaction with IQSEC1 region spans residues alanine 867 to glycine 877. Tyrosine 876 is modified (phosphotyrosine). Residue serine 880 is modified to Phosphoserine.

It belongs to the glutamate-gated ion channel (TC 1.A.10.1) family. GRIA2 subfamily. In terms of assembly, homotetramer or heterotetramer of pore-forming glutamate receptor subunits. Tetramers may be formed by the dimerization of dimers. May interact with MPP4. Forms a ternary complex with GRIP1 and CSPG4. Interacts with ATAD1 in an ATP-dependent manner. ATAD1-catalyzed ATP hydrolysis disrupts binding to ATAD1 and to GRIP1 and leads to AMPAR complex disassembly. Interacts with GRIP1 and GRIP2. Interacts with NSF via its C-terminus. Isoform 1, but not isoform 3, interacts with PICK1. Interacts with CACNG2. Interacts with GRIA1 and SYNDIG1. Part of a complex containing GRIA2, NSF and NAPA and/or NAPB. Interacts with SNX27 (via PDZ domain); the interaction is required for recycling to the plasma membrane when endocytosed and prevent degradation in lysosomes. Interacts with LRFN1. Found in a complex with GRIA1, GRIA3, GRIA4, CNIH2, CNIH3, CACNG2, CACNG3, CACNG4, CACNG5, CACNG7 and CACNG8. Interacts with CACNG5. Interacts with OLFM2. Interacts with AP4B1, AP4E1 and AP4M1; probably indirect it mediates the somatodendritic localization of GRIA2 in neurons. Forms a complex with GRIP1, NSG1 and STX12; controls the intracellular fate of AMPAR and the endosomal sorting of the GRIA2 subunit toward recycling and membrane targeting. Interacts with IQSEC1; the interaction is required for ARF6 activation. Interacts (heterotetramer form) with CNIH2 and CNIH3; this interaction promotes expression at the plasma membrane and extensively modulates their gating properties by slowing deactivation and desensitization kinetics. In terms of processing, palmitoylated. Depalmitoylated upon L-glutamate stimulation. Cys-610 palmitoylation leads to Golgi retention and decreased cell surface expression. In contrast, Cys-836 palmitoylation does not affect cell surface expression but regulates stimulation-dependent endocytosis. Post-translationally, ubiquitinated by RNF167, leading to its degradation. Phosphorylation at Tyr-876 is required for interaction with IQSEC1 and ARF6 activation, which in turn triggers AMPAR internalization for persistent synaptic depression. In terms of processing, N-glycosylated.

The protein localises to the cell membrane. It is found in the postsynaptic cell membrane. Its subcellular location is the postsynaptic density membrane. The catalysed reaction is Ca(2+)(in) = Ca(2+)(out). It carries out the reaction Na(+)(in) = Na(+)(out). Ionotropic glutamate receptor that functions as a ligand-gated cation channel, gated by L-glutamate and glutamatergic agonists such as alpha-amino-3-hydroxy-5-methyl-4-isoxazolepropionic acid (AMPA), quisqualic acid, and kainic acid. L-glutamate acts as an excitatory neurotransmitter at many synapses in the central nervous system and plays an important role in fast excitatory synaptic transmission. Binding of the excitatory neurotransmitter L-glutamate induces a conformation change, leading to the opening of the cation channel, and thereby converts the chemical signal to an electrical impulse upon entry of monovalent and divalent cations such as sodium and calcium. The receptor then desensitizes rapidly and enters in a transient inactive state, characterized by the presence of bound agonist. In the presence of CACNG4 or CACNG7 or CACNG8, shows resensitization which is characterized by a delayed accumulation of current flux upon continued application of L-glutamate. Through complex formation with NSG1, GRIP1 and STX12 controls the intracellular fate of AMPAR and the endosomal sorting of the GRIA2 subunit toward recycling and membrane targeting. In Homo sapiens (Human), this protein is Glutamate receptor 2.